Here is a 541-residue protein sequence, read N- to C-terminus: ATP synthase subunit alpha (541 aa).

173 to 180 (GDRQTGKT) is an ATP binding site. A compositionally biased stretch (basic and acidic residues) spans 517–527 (GIEPGVEEHES). A disordered region spans residues 517-541 (GIEPGVEEHESLGATAVNQETIVKK). Polar residues predominate over residues 532–541 (AVNQETIVKK).

Belongs to the ATPase alpha/beta chains family. F-type ATPases have 2 components, CF(1) - the catalytic core - and CF(0) - the membrane proton channel. CF(1) has five subunits: alpha(3), beta(3), gamma(1), delta(1), epsilon(1). CF(0) has three main subunits: a(1), b(2) and c(9-12). The alpha and beta chains form an alternating ring which encloses part of the gamma chain. CF(1) is attached to CF(0) by a central stalk formed by the gamma and epsilon chains, while a peripheral stalk is formed by the delta and b chains.

The protein localises to the cell membrane. It catalyses the reaction ATP + H2O + 4 H(+)(in) = ADP + phosphate + 5 H(+)(out). Produces ATP from ADP in the presence of a proton gradient across the membrane. The alpha chain is a regulatory subunit. The polypeptide is ATP synthase subunit alpha (Kocuria rhizophila (strain ATCC 9341 / DSM 348 / NBRC 103217 / DC2201)).